Reading from the N-terminus, the 314-residue chain is Target of rapamycin complex subunit wat1 (314 aa).

7 WD repeats span residues 1–35 (MSVQ…CSRT), 38–76 (HADS…QMPL), 81–120 (GHTN…VQRN), 122–161 (DHKS…CTHE), 165–204 (EEDV…GASL), 213–252 (AHQR…FMLE), and 257–296 (GHQR…TIRQ). S141 carries the post-translational modification Phosphoserine.

The protein belongs to the WD repeat LST8 family. The target of rapamycin complex 1 (TORC1) is composed of at least mip1, pop3/wat1, tco89, toc1 and tor2. The target of rapamycin complex 2 (TORC2) is composed of at least bit61, pop3/wat1, sin1, ste20 and tor1. Interacts with prp2.

It is found in the cytoplasm. Its subcellular location is the nucleus. In terms of biological role, component of both TORC1 and TORC2, which regulate multiple cellular processes to control cell growth in response to environmental signals. Nutrient limitation and environmental stress signals cause inactivation of TORC1. Active TORC1 positively controls cell growth and ribosome biogenesis by regulating ribosomal protein gene expression. TORC1 negatively controls G1 cell-cycle arrest, sexual development and amino acid uptake. Represses mating, meiosis and sporulation efficiency by interfering with the functions of the transcription factor ste11 and the meiosis-promoting RNA-binding protein mei2. TORC2 is required for cell survival under various stress conditions. TORC2 positively controls G1 cell-cycle arrest, sexual development and amino acid uptake. Positively regulates amino acid uptake through the control of expression of amino acid permeases. May play a role in mRNA maturation as a coupling protein between splicing and synthesis and/or stabilization. In Schizosaccharomyces pombe (strain 972 / ATCC 24843) (Fission yeast), this protein is Target of rapamycin complex subunit wat1.